An 809-amino-acid polypeptide reads, in one-letter code: Histone H2A deubiquitinase MYSM1 (809 aa).

Residues 33 to 78 (GYEPNWMFDHGQEIYGRSWTSISQFVQTRTPLQVKNYARHFFKTKV) form the SANT domain. Disordered stretches follow at residues 113 to 140 (PAQP…VTED) and 320 to 378 (DATD…KETY). Composition is skewed to basic and acidic residues over residues 335 to 345 (TLDHPEDRSKP) and 363 to 378 (TDGR…KETY). The 99-residue stretch at 410-508 (FKKPTEEVVL…FGCEEANRGE (99 aa)) folds into the SWIRM domain. One can recognise an MPN domain in the interval 592-719 (VKIHATALVT…YSSTRISPLS (128 aa)). His671, His673, and Asp684 together coordinate Zn(2+). The short motif at 671–684 (HSHPTFAPNPSVRD) is the JAMM motif element.

This sequence belongs to the peptidase M67A family. MYSM1 subfamily.

The protein localises to the nucleus. In terms of biological role, metalloprotease that specifically deubiquitinates monoubiquitinated histone H2A, a specific tag for epigenetic transcriptional repression, thereby acting as a coactivator. Preferentially deubiquitinates monoubiquitinated H2A in hyperacetylated nucleosomes. Deubiquitination of histone H2A leads to facilitate the phosphorylation and dissociation of histone H1 from the nucleosome. Acts as a coactivator by participating in the initiation and elongation steps of androgen receptor (AR)-induced gene activation. The chain is Histone H2A deubiquitinase MYSM1 (MYSM1) from Branchiostoma floridae (Florida lancelet).